Reading from the N-terminus, the 381-residue chain is MAINHLLEIKEYGQSIWMDNLSRDIIQSGELKNLVENQGICGITSNPAIFEKAIANNVIYDADIEAGVRAGLPTYKIYESLIFADIRNACDILRPVYEASNKLDGYVSIEVPPTIAHDTQATINEARRYYQEIGRENVMIKIPGTEAGLPAVEQVIAEGINVNVTLLFSVQSYINTIWAYIRGLEKRLAEGKDISQIASVASFFLSRIDINIDGKIDAKLARGVDDISLEAKLMVVKGKVAIANAKIAYQEYKKIIESDQWQALAAKGAKVQRLLWASTSTKDPNYSDVMYVDELIGPDTVNTLPPATITACADHCEVANRVETGVAEAYQLIESLKDPDINIDINAVMDELLIEGINKFVQPFQSLMNSLEGKVKLLSPV.

Lysine 141 (schiff-base intermediate with substrate) is an active-site residue.

This sequence belongs to the transaldolase family. Type 2 subfamily.

Its subcellular location is the cytoplasm. It catalyses the reaction D-sedoheptulose 7-phosphate + D-glyceraldehyde 3-phosphate = D-erythrose 4-phosphate + beta-D-fructose 6-phosphate. It functions in the pathway carbohydrate degradation; pentose phosphate pathway; D-glyceraldehyde 3-phosphate and beta-D-fructose 6-phosphate from D-ribose 5-phosphate and D-xylulose 5-phosphate (non-oxidative stage): step 2/3. Its function is as follows. Transaldolase is important for the balance of metabolites in the pentose-phosphate pathway. The sequence is that of Transaldolase 2 (tal2) from Nostoc sp. (strain PCC 7120 / SAG 25.82 / UTEX 2576).